A 150-amino-acid chain; its full sequence is Large ribosomal subunit protein uL15 (150 aa).

It belongs to the universal ribosomal protein uL15 family. As to quaternary structure, part of the 50S ribosomal subunit.

In terms of biological role, binds to the 23S rRNA. The sequence is that of Large ribosomal subunit protein uL15 from Anaplasma marginale (strain Florida).